The primary structure comprises 957 residues: Glycine dehydrogenase (decarboxylating) (957 aa).

Position 708 is an N6-(pyridoxal phosphate)lysine (lysine 708).

Belongs to the GcvP family. The glycine cleavage system is composed of four proteins: P, T, L and H. Requires pyridoxal 5'-phosphate as cofactor.

It carries out the reaction N(6)-[(R)-lipoyl]-L-lysyl-[glycine-cleavage complex H protein] + glycine + H(+) = N(6)-[(R)-S(8)-aminomethyldihydrolipoyl]-L-lysyl-[glycine-cleavage complex H protein] + CO2. In terms of biological role, the glycine cleavage system catalyzes the degradation of glycine. The P protein binds the alpha-amino group of glycine through its pyridoxal phosphate cofactor; CO(2) is released and the remaining methylamine moiety is then transferred to the lipoamide cofactor of the H protein. In Salmonella dublin (strain CT_02021853), this protein is Glycine dehydrogenase (decarboxylating).